An 87-amino-acid chain; its full sequence is U3-theraphotoxin-Hhn1a 3 (87 aa).

Residues 1 to 24 (MVNMKASMFLTFAGLVLLFVVCYA) form the signal peptide. Residues 25-52 (PESEEKEFPKEMLSSIFAVDNDFKQEER) constitute a propeptide that is removed on maturation. Cystine bridges form between cysteine 54-cysteine 67, cysteine 61-cysteine 72, and cysteine 66-cysteine 79.

This sequence belongs to the neurotoxin 10 (Hwtx-1) family. 51 (Hntx-8) subfamily. Hntx-8 sub-subfamily. As to expression, expressed by the venom gland.

It localises to the secreted. Its function is as follows. Ion channel inhibitor. This Cyriopagopus hainanus (Chinese bird spider) protein is U3-theraphotoxin-Hhn1a 3.